Reading from the N-terminus, the 314-residue chain is Protein YIF1B (314 aa).

Methionine 1 is subject to N-acetylmethionine. Over residues 1 to 12 (MHPAGLAAAAAG) the composition is skewed to low complexity. The interval 1-55 (MHPAGLAAAAAGTPRLRKWPSKRRIPVSQPGMADPHQLFDDTSSAQSRGYGAQRA) is disordered. The Cytoplasmic segment spans residues 1–156 (MHPAGLAAAA…APRFDVNAPD (156 aa)). Threonine 13 carries the phosphothreonine modification. Basic residues predominate over residues 15 to 25 (RLRKWPSKRRI). Position 65 is a phosphoserine (serine 65). Residues 157–177 (LYIPAMAFITYVLVAGLALGT) traverse the membrane as a helical segment. The Extracellular segment spans residues 178–192 (QDRFSPDLLGLQASS). A helical membrane pass occupies residues 193–213 (ALAWLTLEVLAILLSLYLVTV). Over 214–219 (NTDLTT) the chain is Cytoplasmic. Residues 220-240 (IDLVAFLGYKYVGMIGGVLMG) traverse the membrane as a helical segment. Residue leucine 241 is a topological domain, extracellular. A helical membrane pass occupies residues 242 to 262 (LFGKIGYYLVLGWCCVAIFVF). Residues 263 to 292 (MIRTLRLKILADAAAEGVPVRGARNQLRMY) lie on the Cytoplasmic side of the membrane. Residues 293-313 (LTMAVAAAQPMLMYWLTFHLV) form a helical membrane-spanning segment. A topological domain (extracellular) is located at residue arginine 314.

The protein belongs to the YIF1 family. In terms of assembly, interacts with HTR1A (via C-terminus). Interacts with ABCB9 (via TMD0); this interaction allows (but is not essential) the ER-to-Golgi trafficking and strongly depends on a salt bridge within TMD0.

The protein localises to the endoplasmic reticulum membrane. The protein resides in the golgi apparatus membrane. It localises to the endoplasmic reticulum-Golgi intermediate compartment membrane. Functions in endoplasmic reticulum to Golgi vesicle-mediated transport and regulates the proper organization of the endoplasmic reticulum and the Golgi. Plays a key role in targeting to neuronal dendrites receptors such as HTR1A. Plays also a role in primary cilium and sperm flagellum assembly probably through protein transport to these compartments. The protein is Protein YIF1B of Homo sapiens (Human).